Here is an 84-residue protein sequence, read N- to C-terminus: UPF0248 protein Pisl_1919 (84 aa).

The protein belongs to the UPF0248 family.

The polypeptide is UPF0248 protein Pisl_1919 (Pyrobaculum islandicum (strain DSM 4184 / JCM 9189 / GEO3)).